A 534-amino-acid polypeptide reads, in one-letter code: MTKYIFVTGGVVSSIGKGIVAASLGRLLKNRGLKVTIQKFDPYINIDPGTMSPYQHGEVYVTDDGAETDLDLGHYERFIDINLNKYSNVTTGKIYSEVLRKERKGEYLGATVQVIPHITDALKEKIKRAASTTDSDVIITEVGGTVGDIESLPFLEALRQMKADVGSENVMYIHTTLLPYLKAAGEMKTKPTQHSVKELRGLGIQPNMLVIRTEEPVEQGIKNKLAQFCDVNSEAVIESRNVEHLYQIPLNLQAQSMDQIVCDHLKLNAPQADMTEWSAMVDKVMNLRKTTKIALVGKYVELPDAYLSVVEALKHSGYANDTAIDLKWVNANDVTVDNAADLLGDADGIIVPGGFGQRGTEGKIQAIRYARENDVPMLGICLGMQLTCVEFARHVLNMEGANSFELEPSTKYPIIDIMRDQIDIEDMGGTLRLGLYPCKLKPGSKAAMAYNNQEVVQRRHRHRYEFNNKFRPEFEAAGFVFSGVSPDNRLVEIVELKEKKFFVAAQYHPELQSRPNRPEELYTAFVTAAIKNSN.

The interval 1 to 267 (MTKYIFVTGG…DQIVCDHLKL (267 aa)) is amidoligase domain. Residue serine 13 coordinates CTP. Serine 13 serves as a coordination point for UTP. 14–19 (SIGKGI) serves as a coordination point for ATP. Tyrosine 54 contacts L-glutamine. Residue aspartate 71 coordinates ATP. Positions 71 and 141 each coordinate Mg(2+). CTP-binding positions include 148–150 (DIE), 188–193 (KTKPTQ), and lysine 224. UTP-binding positions include 188-193 (KTKPTQ) and lysine 224. 240-242 (RNV) contributes to the ATP binding site. The 243-residue stretch at 292–534 (KIALVGKYVE…FVTAAIKNSN (243 aa)) folds into the Glutamine amidotransferase type-1 domain. An L-glutamine-binding site is contributed by glycine 354. Cysteine 381 (nucleophile; for glutamine hydrolysis) is an active-site residue. Residues 382-385 (LGMQ), glutamate 405, and arginine 463 contribute to the L-glutamine site. Active-site residues include histidine 508 and glutamate 510.

The protein belongs to the CTP synthase family. In terms of assembly, homotetramer.

The enzyme catalyses UTP + L-glutamine + ATP + H2O = CTP + L-glutamate + ADP + phosphate + 2 H(+). The catalysed reaction is L-glutamine + H2O = L-glutamate + NH4(+). It catalyses the reaction UTP + NH4(+) + ATP = CTP + ADP + phosphate + 2 H(+). It participates in pyrimidine metabolism; CTP biosynthesis via de novo pathway; CTP from UDP: step 2/2. Allosterically activated by GTP, when glutamine is the substrate; GTP has no effect on the reaction when ammonia is the substrate. The allosteric effector GTP functions by stabilizing the protein conformation that binds the tetrahedral intermediate(s) formed during glutamine hydrolysis. Inhibited by the product CTP, via allosteric rather than competitive inhibition. Its function is as follows. Catalyzes the ATP-dependent amination of UTP to CTP with either L-glutamine or ammonia as the source of nitrogen. Regulates intracellular CTP levels through interactions with the four ribonucleotide triphosphates. This is CTP synthase from Streptococcus pyogenes serotype M28 (strain MGAS6180).